The primary structure comprises 368 residues: Phospho-N-acetylmuramoyl-pentapeptide-transferase (368 aa).

10 helical membrane passes run 32–52, 79–99, 102–122, 140–160, 176–196, 207–227, 247–267, 271–291, 296–316, and 345–365; these read TGGA…WIID, TPTM…VLWA, LNPY…IGFY, TRLL…IRLG, VVVD…VGAG, GLAI…AYLA, LAVL…FNAP, IFMG…IAVA, IVLA…IVQV, and QIVI…LSTL.

Belongs to the glycosyltransferase 4 family. MraY subfamily. Mg(2+) serves as cofactor.

The protein localises to the cell inner membrane. The enzyme catalyses UDP-N-acetyl-alpha-D-muramoyl-L-alanyl-gamma-D-glutamyl-meso-2,6-diaminopimeloyl-D-alanyl-D-alanine + di-trans,octa-cis-undecaprenyl phosphate = di-trans,octa-cis-undecaprenyl diphospho-N-acetyl-alpha-D-muramoyl-L-alanyl-D-glutamyl-meso-2,6-diaminopimeloyl-D-alanyl-D-alanine + UMP. The protein operates within cell wall biogenesis; peptidoglycan biosynthesis. Catalyzes the initial step of the lipid cycle reactions in the biosynthesis of the cell wall peptidoglycan: transfers peptidoglycan precursor phospho-MurNAc-pentapeptide from UDP-MurNAc-pentapeptide onto the lipid carrier undecaprenyl phosphate, yielding undecaprenyl-pyrophosphoryl-MurNAc-pentapeptide, known as lipid I. This is Phospho-N-acetylmuramoyl-pentapeptide-transferase from Nitrobacter hamburgensis (strain DSM 10229 / NCIMB 13809 / X14).